The following is a 512-amino-acid chain: SNF1-related protein kinase catalytic subunit alpha KIN10 (512 aa).

One can recognise a Protein kinase domain in the interval 19 to 271 (YKLGRTLGIG…IPEIRQHPWF (253 aa)). Lys20 participates in a covalent cross-link: Glycyl lysine isopeptide (Lys-Gly) (interchain with G-Cter in ubiquitin). 25-33 (LGIGSFGRV) contributes to the ATP binding site. Residue Lys34 forms a Glycyl lysine isopeptide (Lys-Gly) (interchain with G-Cter in SUMO) linkage. Lys48 serves as a coordination point for ATP. Residue Lys63 forms a Glycyl lysine isopeptide (Lys-Gly) (interchain with G-Cter in SUMO) linkage. Asp142 serves as the catalytic Proton acceptor. A Phosphoserine modification is found at Ser164. Position 175 is a phosphothreonine; by GRIK1 or GRIK2 (Thr175). Residues 290–389 (AKKIDEEILQ…GLRSQYPVER (100 aa)) are auto-inhibitory domain (AID). The UBA domain maps to 292–332 (KIDEEILQEVINMGFDRNHLIESLRNRTQNDGTVTYYLILD). Positions 294–512 (DEEILQEVIN…AAFLAQLRVL (219 aa)) are regulatory domain (RD). Ser364 carries the post-translational modification Phosphoserine. Lys390 participates in a covalent cross-link: Glycyl lysine isopeptide (Lys-Gly) (interchain with G-Cter in SUMO). Residues 390–512 (KWALGLQSRA…AAFLAQLRVL (123 aa)) are PPI. The region spanning 463–511 (AVKSPNVVKFEIQLYKTRDDKYLLDLQRVQGPQFLFLDLCAAFLAQLRV) is the KA1 domain.

This sequence belongs to the protein kinase superfamily. CAMK Ser/Thr protein kinase family. SNF1 subfamily. Subunit of a probable heterotrimeric complex consisting of an alpha catalytic (KIN10 or KIN11) subunit, and a beta (KINB) and a gamma (KING or SNF4) non-catalytic regulatory subunits. Interacts with KINB2, KINB3, SNF4 and probably with KINB1 and KING1. Interacts with SKP1/ASK1, PAD1, the N-terminus of PRL1 and the WD40 domain of 5PTase13. Potential subunit of a SCF ubiquitin ligase complex consisting of a SNF1-related protein kinase, SKP1 and CUL1. The association of the SCF complex with the proteasome may be mediated by PAD1 and seems to be inhibited by the interaction with PRL1. Interacts with ATAF1. Interacts with ESD4. Interacts with SCE1. Interacts with FUS3. Interacts with PP2C74. Interacts with CDKE1. Interacts with ABI1 and PP2CA. Interacts with KRP6. Interacts with CIPK14. Interacts with FLZ proteins through their FLZ-type zinc finger domains. Interacts with GEBP/STKR1. Interacts with MYC2. Interacts with IDD8. Interacts with BZIP63. Interacts with PTL. Interacts with FLZ3, FLZ9, TCP3, TCP13, HB21/ZHD3 and HB23/ZHD10. Interacts with PTP1. Interacts with RAPTOR1B. Forms oligomers in vitro under strongly reducing conditions. Interacts with WRI1. Interacts with EIN3. Component of a ternary complex composed of BZIP2-BZIP63 heterodimer and KIN10. Interacts with IPK2b. Interacts with FLZ6 and FLZ10. Phosphorylated at Thr-175 in response to glucose. Phosphorylated at Thr-175 under submergence. Autophosphorylated. Dephosphorylated at Thr-175 by ABI1 and PP2CA. Post-translationally, ubiquitinated. Degradation is mediated by a CUL4-based E3 ligase that uses PRL1 as a substrate receptor. In terms of processing, sumoylated by SIZ1. Sumoylated SnRK1 is ubiquitinated and degraded by the proteasome. In terms of tissue distribution, isoform 2 is widely expressed, especially in newly developing tissues. Isoform 2 is expressed throughout the seedling, with highest expression in leaf primordia and vascular tissue, and the seedling root tip. Isoform 2 is later expressed in developing lateral root primordia and developing embryos within siliques. Isoform 1 is widely expressed but at very low levels.

The protein localises to the plastid. Its subcellular location is the chloroplast. It is found in the cytoplasm. It localises to the nucleus. The protein resides in the golgi apparatus. The protein localises to the endoplasmic reticulum. The catalysed reaction is L-seryl-[protein] + ATP = O-phospho-L-seryl-[protein] + ADP + H(+). It carries out the reaction L-threonyl-[protein] + ATP = O-phospho-L-threonyl-[protein] + ADP + H(+). Activated by phosphorylation at Thr-175 by GRIK1/SNAK2 and GRIK2/SNAK1. Inactivated by dephosphorylation at Thr-175. Inhibited by trehalose-6-phosphate. Down-regulated by SR45 by affecting its stability. Reduced kinase activity in response to H(2)O(2) treatment. The redox-state of Cys-177 seems to directly influence its kinase activity. Down-regulated by FLZ6 and FLZ10. Its function is as follows. Catalytic subunit of the probable trimeric SNF1-related protein kinase (SnRK) complex, a central regulator of cellular energy homeostasis, which, in response to seemingly unrelated darkness, sugar and stress conditions, activates energy-producing pathways and inhibits energy-consuming processes. May play a role in a signal transduction cascade regulating gene expression and carbohydrate metabolism in higher plants. The SnRK complex may also be involved in the regulation of fatty acid synthesis by phosphorylation of acetyl-CoA carboxylase and in assimilation of nitrogen by phosphorylating nitrate reductase. In vitro, KIN10 exhibits kinase activity on sucrose phosphate synthase and the kinase activity is inhibited by PRL1. May be a subunit of a SCF ubiquitin ligase complex and thus be involved in proteasomal ubiquitination. Phosphorylates GRIK1/SNAK2 and GRIK2/SNAK1 in vitro. Cooperates with FUS3 to regulate developmental phase transitions and lateral organ development and act both as positive regulators of abscisic acid (ABA) signaling during germination. Phosphorylates FUS3 in embryo. Negatively modulates MYC2 accumulation through its protein phosphorylation. Phosphorylates geminivirus (CaLCuV, TGMV, ToMoV) AL2 protein resulting in a delay in the viral DNA accumulation and symptom appearance during infection. Regulates bZIP63 activity to alter metabolism in response to starvation through its protein phosphorylation. Under sugar deprivation conditions, antagonizes the IDD8 function in flowering time control by its protein phosphorylation. Plays a cardinal role in the control of cell proliferation through inhibition of KRP6 activity by its protein phosphorylation. Under submergence, phosphorylates PTP1, leading to the release of the MPK6 signaling pathway inhibition. Triggers its own SUMO-mediated proteasomal degradation, establishing a negative feedback loop that attenuates SnRK1 signaling and prevents detrimental hyperactivation of stress responses. Phosphorylates RAPTOR1B in vitro. Phosphorylates and down-regulates HMGR1S in vitro. Kinase activity is redox-sensitive. Acts upstream of TOR in the regulation of autophagy. Required for the activation of autophagy by many abiotic stresses. Involved in positive regulation of autophagy, possibly by affecting the phosphorylation of ATG1 proteins. Negatively modulates WRI1 accumulation through its protein phosphorylation. Modulates leaf senescence progression by the negative regulation of EIN3 accumulation through its protein phosphorylation. Under extended darkness, C/S1-bZIP-SnRK1 complex interacts with the histone acetylation machinery to remodel chromatin and facilitate transcription. BZIP2-BZIP63-KIN10 complex binds to the ETFQO promoter to up-regulate its transcription. Phosphorylates and down-regulates IPK2b in vitro. Involved in the regulation of sucrose-induced hypocotyl elongation under light/dark cycles. This Arabidopsis thaliana (Mouse-ear cress) protein is SNF1-related protein kinase catalytic subunit alpha KIN10.